Reading from the N-terminus, the 2550-residue chain is Highly reducing polyketide synthase otaA (2550 aa).

The region spanning 9-431 (SEPLAIIGLA…GTNAHAVVED (423 aa)) is the Ketosynthase family 3 (KS3) domain. Catalysis depends on for beta-ketoacyl synthase activity residues Cys182, His317, and His355. Residues 572-894 (FVFTGQGANW…KRYETNGSTI (323 aa)) form a malonyl-CoA:ACP transacylase (MAT) domain region. The tract at residues 959–1094 (HELLGVPVED…GSVRAETGPP (136 aa)) is N-terminal hotdog fold. The segment at 959–1252 (HELLGVPVED…DLVQLPANND (294 aa)) is dehydratase (DH) domain. Residues 959–1253 (HELLGVPVED…LVQLPANNDD (295 aa)) enclose the PKS/mFAS DH domain. The C-terminal hotdog fold stretch occupies residues 1107–1253 (AEPVDIAQMY…LVQLPANNDD (147 aa)). Residues Ile1420 and Glu1442 each contribute to the S-adenosyl-L-methionine site. The tract at residues 1433–1612 (HAQTGIKILE…GLRPRLIIND (180 aa)) is methyltransferase (CMeT) domain. The interval 1859–1919 (PDEVKIRIHA…DQVMALRTGP (61 aa)) is enoyl reductase (ER) (ER) domain. Residues 2166–2345 (ASYLLIGGFG…PATSVSLGSV (180 aa)) form a ketoreductase (KR) domain region. The Carrier domain occupies 2454–2531 (AAVEVVTRAI…QLAQQAADAS (78 aa)). Position 2491 is an O-(pantetheine 4'-phosphoryl)serine (Ser2491).

Pantetheine 4'-phosphate is required as a cofactor.

The enzyme catalyses 4 malonyl-CoA + acetyl-CoA + 5 NADPH + 9 H(+) = 7-methylmellein + 3 CO2 + 5 NADP(+) + 5 CoA + 4 H2O. Its pathway is mycotoxin biosynthesis. In terms of biological role, highly reducing polyketide synthase; part of the gene cluster that mediates the biosynthesis of ochratoxin A (OTA), a mycotoxin composed of a chlorinated type I polyketide dihydroisocoumarin moiety linked to L-phenylalanine, and demonstrated to have nephrotoxic, immunotoxic, genotoxic, neurotoxic, and teratogenic properties. OtaA catalyzes the condensation of one acetate and 4 malonate units to form the isocoumarin group. The pathway begins with the highly reducing polyketide synthase otaA that catalyzes the formation of the isocoumarin group during the initial stages of biosynthesis, starting from one acetate and 4 malonate units, to originate the characteristic pentaketide skeleton 7-methylmellein (7-MM) of the OTA molecule. The newly identified cyclase otaY might be involved in the polyketide cyclization reaction during the initial steps of the OTA biosynthesis. 7-MM is then oxidized into 7-carboxymellein (also called ochratoxin beta) by the cytochrome P450 monooxygenase otaC. The NRPS encoded by the otaB gene is involved in the linking of phenylalanine to the dihydroisocoumarin ring. The reaction catalyzed by NRPS results in the production of ochratoxin B (OTB), which is the non-chlorinated analog of OTA and which subsequently serves as the substrate of the halogenase otaD for chlorination activity to form the final molecular structure of OTA, containing a chlorine atom in the C-5 position of the molecule. The polypeptide is Highly reducing polyketide synthase otaA (Aspergillus niger (strain ATCC MYA-4892 / CBS 513.88 / FGSC A1513)).